We begin with the raw amino-acid sequence, 423 residues long: UDP-N-acetylglucosamine 1-carboxyvinyltransferase 2 (423 aa).

23–24 lines the phosphoenolpyruvate pocket; the sequence is KN. UDP-N-acetyl-alpha-D-glucosamine is bound at residue Arg93. The Proton donor role is filled by Cys117. A 2-(S-cysteinyl)pyruvic acid O-phosphothioketal modification is found at Cys117. UDP-N-acetyl-alpha-D-glucosamine-binding positions include 122–126, Asp305, and Ile327; that span reads RPIDQ.

Belongs to the EPSP synthase family. MurA subfamily.

It is found in the cytoplasm. The catalysed reaction is phosphoenolpyruvate + UDP-N-acetyl-alpha-D-glucosamine = UDP-N-acetyl-3-O-(1-carboxyvinyl)-alpha-D-glucosamine + phosphate. Its pathway is cell wall biogenesis; peptidoglycan biosynthesis. Cell wall formation. Adds enolpyruvyl to UDP-N-acetylglucosamine. The sequence is that of UDP-N-acetylglucosamine 1-carboxyvinyltransferase 2 from Listeria monocytogenes serotype 4b (strain F2365).